The primary structure comprises 160 residues: Probable chemoreceptor glutamine deamidase CheD 1 (160 aa).

Belongs to the CheD family.

The enzyme catalyses L-glutaminyl-[protein] + H2O = L-glutamyl-[protein] + NH4(+). Probably deamidates glutamine residues to glutamate on methyl-accepting chemotaxis receptors (MCPs), playing an important role in chemotaxis. The protein is Probable chemoreceptor glutamine deamidase CheD 1 of Syntrophus aciditrophicus (strain SB).